The chain runs to 282 residues: MVTRKPAVAGMFYEASKDGLINQIKWSIEHELGPKSTMNVKENRQYVLSVIVPHAGYVYSGPVAAHAYVEVGKYIKPKVFVIIGPNHYGVGSPAAIMTSGTWETPLGQVEIDEEVAKQIKAKVKDLAEDPIAFEREHSIEVQVPFIQYLFPGSRIVPIVLWNQTIDLSRRLGSAISEVIDGRAGEVVVVASSDLNHYEPHEVTTDKDMKVIERILNMDEEGFYTVMDKYDVSVCGFGAIMTAIVYSRKQGSTGVKLLKHATSGDTSGYLLETVGYASIAFYK.

The protein belongs to the MEMO1 family.

The polypeptide is MEMO1 family protein Cmaq_1590 (Caldivirga maquilingensis (strain ATCC 700844 / DSM 13496 / JCM 10307 / IC-167)).